Here is a 141-residue protein sequence, read N- to C-terminus: Lutropin subunit beta (141 aa).

Residues 1–20 (MEMLQGLLLLMLLSMGGTWA) form the signal peptide. Cystine bridges form between C29–C77, C43–C92, C46–C130, C54–C108, C58–C110, and C113–C120. N33 and N50 each carry an N-linked (GlcNAc...) asparagine glycan.

Belongs to the glycoprotein hormones subunit beta family. As to quaternary structure, heterodimer of a common alpha chain and a unique beta chain which confers biological specificity to thyrotropin, lutropin, follitropin and gonadotropin.

It is found in the secreted. Its function is as follows. Promotes spermatogenesis and ovulation by stimulating the testes and ovaries to synthesize steroids. This chain is Lutropin subunit beta (LHB), found in Pongo pygmaeus (Bornean orangutan).